Here is an 87-residue protein sequence, read N- to C-terminus: Small ribosomal subunit protein bS18 (87 aa).

Belongs to the bacterial ribosomal protein bS18 family. In terms of assembly, part of the 30S ribosomal subunit. Forms a tight heterodimer with protein bS6.

Binds as a heterodimer with protein bS6 to the central domain of the 16S rRNA, where it helps stabilize the platform of the 30S subunit. The sequence is that of Small ribosomal subunit protein bS18 from Nitratidesulfovibrio vulgaris (strain DSM 19637 / Miyazaki F) (Desulfovibrio vulgaris).